Consider the following 114-residue polypeptide: Lymphotactin (114 aa).

The N-terminal stretch at Met1–Gly21 is a signal peptide. Cys32 and Cys69 are disulfide-bonded. Residues Lys92–Gly114 are disordered. A compositionally biased stretch (polar residues) spans Thr100–Gly114.

The protein belongs to the intercrine gamma family. In terms of tissue distribution, expressed in activated CD8(+) T cells. In the thymus, expressed by medullary thymic epithelial cells.

The protein resides in the secreted. In terms of biological role, chemotactic activity for lymphocytes but not for monocytes or neutrophils. In thymus, mediates medullary accumulation of thymic dendritic cells and contributes to regulatoy T cell development, playing a role in self-tolerance establishment. The polypeptide is Lymphotactin (Xcl1) (Mus musculus (Mouse)).